A 252-amino-acid chain; its full sequence is Small ribosomal subunit protein uS3 (252 aa).

In terms of domain architecture, KH type-2 spans 16-85; sequence IDEYLETKLE…NPQVEVKEVD (70 aa). Residues 233–252 form a disordered region; the sequence is EESEIEEITEEIEDVETLEE.

The protein belongs to the universal ribosomal protein uS3 family. Part of the 30S ribosomal subunit.

Its function is as follows. Binds the lower part of the 30S subunit head. This is Small ribosomal subunit protein uS3 from Methanosphaera stadtmanae (strain ATCC 43021 / DSM 3091 / JCM 11832 / MCB-3).